Here is a 317-residue protein sequence, read N- to C-terminus: D-aminoacyl-tRNA deacylase (317 aa).

It belongs to the DtdA deacylase family. Requires Zn(2+) as cofactor. Ubiquitous.

It localises to the nucleus. It is found in the cytoplasm. The catalysed reaction is a D-aminoacyl-tRNA + H2O = a tRNA + a D-alpha-amino acid + H(+). The enzyme catalyses glycyl-tRNA(Ala) + H2O = tRNA(Ala) + glycine + H(+). Functionally, hydrolyzes D-aminoacyl-tRNA into D-amino acid and free tRNA. Broad specificity toward the amino acid, but strict specificity toward the D-isomer. Seems to be required for ethanol tolerance. This is D-aminoacyl-tRNA deacylase (GEK1) from Arabidopsis thaliana (Mouse-ear cress).